Consider the following 550-residue polypeptide: CTP synthase (550 aa).

The amidoligase domain stretch occupies residues Met-1–Met-271. Residue Ser-13 participates in CTP binding. Ser-13 contributes to the UTP binding site. Residue Ser-14–Leu-19 participates in ATP binding. Tyr-54 lines the L-glutamine pocket. Residue Asp-71 participates in ATP binding. Positions 71 and 145 each coordinate Mg(2+). CTP-binding positions include Asp-152–Glu-154, Lys-192–Gln-197, and Lys-228. Residues Lys-192–Gln-197 and Lys-228 contribute to the UTP site. The Glutamine amidotransferase type-1 domain maps to Thr-297 to Leu-549. Residue Gly-361 participates in L-glutamine binding. The active-site Nucleophile; for glutamine hydrolysis is Cys-388. Residues Phe-389–Gln-392, Glu-412, and Arg-477 contribute to the L-glutamine site. Active-site residues include His-522 and Glu-524.

This sequence belongs to the CTP synthase family. Homotetramer.

The enzyme catalyses UTP + L-glutamine + ATP + H2O = CTP + L-glutamate + ADP + phosphate + 2 H(+). The catalysed reaction is L-glutamine + H2O = L-glutamate + NH4(+). It catalyses the reaction UTP + NH4(+) + ATP = CTP + ADP + phosphate + 2 H(+). Its pathway is pyrimidine metabolism; CTP biosynthesis via de novo pathway; CTP from UDP: step 2/2. Allosterically activated by GTP, when glutamine is the substrate; GTP has no effect on the reaction when ammonia is the substrate. The allosteric effector GTP functions by stabilizing the protein conformation that binds the tetrahedral intermediate(s) formed during glutamine hydrolysis. Inhibited by the product CTP, via allosteric rather than competitive inhibition. Its function is as follows. Catalyzes the ATP-dependent amination of UTP to CTP with either L-glutamine or ammonia as the source of nitrogen. Regulates intracellular CTP levels through interactions with the four ribonucleotide triphosphates. The protein is CTP synthase of Caulobacter vibrioides (strain ATCC 19089 / CIP 103742 / CB 15) (Caulobacter crescentus).